The chain runs to 959 residues: Protein SEY1 homolog 1 (959 aa).

Residues Met1–Lys767 are Cytoplasmic-facing. Residues Asn9–Tyr86 adopt a coiled-coil conformation. The interval Glu62–Lys81 is disordered. A GB1/RHD3-type G domain is found at Gly123–Tyr340. Gly133–Ser140 provides a ligand contact to GTP. Residues Thr768–Phe788 form a helical membrane-spanning segment. The Lumenal portion of the chain corresponds to Lys789–Pro791. The helical transmembrane segment at Thr792 to Tyr812 threads the bilayer. The Cytoplasmic portion of the chain corresponds to Ala813–Phe959. The interval Glu849–Ser868 is disordered.

This sequence belongs to the TRAFAC class dynamin-like GTPase superfamily. GB1/RHD3 GTPase family. RHD3 subfamily.

It is found in the endoplasmic reticulum membrane. In terms of biological role, probable GTP-binding protein that may be involved in cell development. The chain is Protein SEY1 homolog 1 from Entamoeba histolytica (strain ATCC 30459 / HM-1:IMSS / ABRM).